Here is a 734-residue protein sequence, read N- to C-terminus: Photosystem I P700 chlorophyll a apoprotein A2 (734 aa).

The next 8 helical transmembrane spans lie at 46–69 (IFASHFGQLAIIFLWTSGNLFHVA), 135–158 (LYNGALFLVILSSISLIAGWLHLQ), 175–199 (LNHHLSGLFGVSSLAWTGHLVHVAI), 273–291 (IAHHHLAIAVVFIIAGHMY), 330–353 (LHFQLGLALASLGVITSLVAQHMY), 369–395 (AALYTHHQYIAGFIMTGAFAHGAIFFI), 417–439 (AIISHLSWASLFLGFHTLGLYVH), and 517–535 (FLVHHAIALGLHTTTLILV). [4Fe-4S] cluster is bound by residues Cys559 and Cys568. The next 2 membrane-spanning stretches (helical) occupy residues 575–596 (AFYLAVFWMLNTIGWVTFYWHW) and 643–665 (LSVWAWMFLFGHLVWATGFMFLI). Residues His654, Met662, and Tyr670 each coordinate chlorophyll a. Trp671 contacts phylloquinone. The helical transmembrane segment at 707–727 (LVGLAHFSVGYIFTYAAFLIA) threads the bilayer.

It belongs to the PsaA/PsaB family. In terms of assembly, the PsaA/B heterodimer binds the P700 chlorophyll special pair and subsequent electron acceptors. PSI consists of a core antenna complex that captures photons, and an electron transfer chain that converts photonic excitation into a charge separation. The eukaryotic PSI reaction center is composed of at least 11 subunits. Requires P700 is a chlorophyll a/chlorophyll a' dimer, A0 is one or more chlorophyll a, A1 is one or both phylloquinones and FX is a shared 4Fe-4S iron-sulfur center. as cofactor.

It localises to the plastid. It is found in the chloroplast thylakoid membrane. It catalyses the reaction reduced [plastocyanin] + hnu + oxidized [2Fe-2S]-[ferredoxin] = oxidized [plastocyanin] + reduced [2Fe-2S]-[ferredoxin]. In terms of biological role, psaA and PsaB bind P700, the primary electron donor of photosystem I (PSI), as well as the electron acceptors A0, A1 and FX. PSI is a plastocyanin-ferredoxin oxidoreductase, converting photonic excitation into a charge separation, which transfers an electron from the donor P700 chlorophyll pair to the spectroscopically characterized acceptors A0, A1, FX, FA and FB in turn. Oxidized P700 is reduced on the lumenal side of the thylakoid membrane by plastocyanin. In Marchantia polymorpha (Common liverwort), this protein is Photosystem I P700 chlorophyll a apoprotein A2.